Reading from the N-terminus, the 117-residue chain is Large ribosomal subunit protein bL19 (117 aa).

It belongs to the bacterial ribosomal protein bL19 family.

Its function is as follows. This protein is located at the 30S-50S ribosomal subunit interface and may play a role in the structure and function of the aminoacyl-tRNA binding site. This is Large ribosomal subunit protein bL19 from Desulfotalea psychrophila (strain LSv54 / DSM 12343).